The primary structure comprises 93 residues: Defensin-like protein 210 (93 aa).

A signal peptide spans 1 to 19 (MKTIILFLTLLVISSSCTS). 3 disulfide bridges follow: Cys63–Cys80, Cys66–Cys85, and Cys70–Cys87.

The protein belongs to the DEFL family.

The protein resides in the secreted. This chain is Defensin-like protein 210, found in Arabidopsis thaliana (Mouse-ear cress).